Here is a 135-residue protein sequence, read N- to C-terminus: Probable transporter XF_0766 (135 aa).

Helical transmembrane passes span 4-24 (YWYPILGGILLGLSTVMLLLL), 45-65 (AQDIPFVVGLVLGPLVFSVIF), 71-91 (VTVAATWPTIIVAGLLVGLGT), and 114-134 (IVATAIFLISGMATATFMGVY).

This sequence belongs to the TsuA/YedE (TC 9.B.102) family.

Its subcellular location is the cell inner membrane. The sequence is that of Probable transporter XF_0766 from Xylella fastidiosa (strain 9a5c).